A 177-amino-acid chain; its full sequence is Large ribosomal subunit protein uL6 (177 aa).

This sequence belongs to the universal ribosomal protein uL6 family. As to quaternary structure, part of the 50S ribosomal subunit.

Its function is as follows. This protein binds to the 23S rRNA, and is important in its secondary structure. It is located near the subunit interface in the base of the L7/L12 stalk, and near the tRNA binding site of the peptidyltransferase center. This Histophilus somni (strain 129Pt) (Haemophilus somnus) protein is Large ribosomal subunit protein uL6.